The primary structure comprises 269 residues: Hydroxypyruvate/pyruvate aldolase (269 aa).

His47 acts as the Proton acceptor in catalysis. 2 residues coordinate a divalent metal cation: Glu151 and Asp177.

Belongs to the HpcH/HpaI aldolase family. It depends on a divalent metal cation as a cofactor.

It carries out the reaction D-glyceraldehyde + 3-hydroxypyruvate = 2-dehydro-D-gluconate. It catalyses the reaction D-glyceraldehyde + 3-hydroxypyruvate = (3R,4S,5R)-3,4,5,6-tetrahydroxy-2-oxohexanoate. The catalysed reaction is D-glyceraldehyde + 3-hydroxypyruvate = 2-dehydro-D-galactonate. The enzyme catalyses D-glyceraldehyde + pyruvate = 2-dehydro-3-deoxy-L-galactonate. It carries out the reaction 2-dehydro-3-deoxy-D-gluconate = D-glyceraldehyde + pyruvate. Aldolase which can catalyze in vitro the aldolisation reaction between hydroxypyruvate (HPA) or pyruvate (PA) and D-glyceraldehyde (D-GA). The condensation of hydroxypyruvate and D-glyceraldehyde produces 2-dehydro-D-gluconate as the major product, (3R,4S,5R)-3,4,5,6-tetrahydroxy-2-oxohexanoate and 2-dehydro-D-galactonate. The condensation of pyruvate and D-glyceraldehyde produces 2-dehydro-3-deoxy-L-galactonate as the major product and 2-dehydro-3-deoxy-D-gluconate. This is Hydroxypyruvate/pyruvate aldolase from Cupriavidus necator (strain ATCC 17699 / DSM 428 / KCTC 22496 / NCIMB 10442 / H16 / Stanier 337) (Ralstonia eutropha).